The primary structure comprises 89 residues: UPF0237 protein CE1668 (89 aa).

An ACT domain is found at 4-78 (IMTVTGQDHT…KEQGLVIRIQ (75 aa)).

Belongs to the UPF0237 family.

This is UPF0237 protein CE1668 from Corynebacterium efficiens (strain DSM 44549 / YS-314 / AJ 12310 / JCM 11189 / NBRC 100395).